Reading from the N-terminus, the 367-residue chain is AdoMet-dependent heme synthase (367 aa).

Residues 15–238 enclose the Radical SAM core domain; that stretch reads DGSPTCKLIA…TSMHLKATCA (224 aa). Residues C31, C35, and C38 each coordinate [4Fe-4S] cluster.

Belongs to the radical SAM superfamily. It depends on [4Fe-4S] cluster as a cofactor.

It catalyses the reaction Fe-coproporphyrin III + 2 S-adenosyl-L-methionine = heme b + 2 5'-deoxyadenosine + 2 L-methionine + 2 CO2. It functions in the pathway porphyrin-containing compound metabolism; protoheme biosynthesis. Functionally, involved in siroheme-dependent heme b biosynthesis. Catalyzes the conversion of Fe-coproporphyrin III into heme by the oxidative decarboxylation of two propionate side chains. In Nitratidesulfovibrio vulgaris (strain ATCC 29579 / DSM 644 / CCUG 34227 / NCIMB 8303 / VKM B-1760 / Hildenborough) (Desulfovibrio vulgaris), this protein is AdoMet-dependent heme synthase.